The following is a 671-amino-acid chain: DNA ligase (671 aa).

Residues 32–36 (DAEYD), 81–82 (SL), and E113 contribute to the NAD(+) site. K115 functions as the N6-AMP-lysine intermediate in the catalytic mechanism. NAD(+) contacts are provided by R136, E173, K290, and K314. 4 residues coordinate Zn(2+): C408, C411, C426, and C432. The 79-residue stretch at 593–671 (EIDSPFAGKT…ETEMLRLLGS (79 aa)) folds into the BRCT domain.

This sequence belongs to the NAD-dependent DNA ligase family. LigA subfamily. Mg(2+) serves as cofactor. Mn(2+) is required as a cofactor.

It carries out the reaction NAD(+) + (deoxyribonucleotide)n-3'-hydroxyl + 5'-phospho-(deoxyribonucleotide)m = (deoxyribonucleotide)n+m + AMP + beta-nicotinamide D-nucleotide.. DNA ligase that catalyzes the formation of phosphodiester linkages between 5'-phosphoryl and 3'-hydroxyl groups in double-stranded DNA using NAD as a coenzyme and as the energy source for the reaction. It is essential for DNA replication and repair of damaged DNA. The chain is DNA ligase from Escherichia coli O1:K1 / APEC.